The sequence spans 177 residues: Cell division protein ZapC (177 aa).

The protein belongs to the ZapC family. As to quaternary structure, interacts directly with FtsZ.

Its subcellular location is the cytoplasm. Contributes to the efficiency of the cell division process by stabilizing the polymeric form of the cell division protein FtsZ. Acts by promoting interactions between FtsZ protofilaments and suppressing the GTPase activity of FtsZ. In Shewanella frigidimarina (strain NCIMB 400), this protein is Cell division protein ZapC.